Reading from the N-terminus, the 203-residue chain is Inosine triphosphate pyrophosphatase (203 aa).

13–18 (TGNAKK) contributes to the ITP binding site. Residue E43 coordinates Mg(2+). Residues K55, 71 to 72 (DT), K88, 147 to 150 (FGWD), K170, and 175 to 176 (HR) each bind ITP.

The protein belongs to the HAM1 NTPase family. In terms of assembly, homodimer. Mg(2+) is required as a cofactor. Requires Mn(2+) as cofactor.

The protein localises to the cytoplasm. The enzyme catalyses ITP + H2O = IMP + diphosphate + H(+). The catalysed reaction is dITP + H2O = dIMP + diphosphate + H(+). It catalyses the reaction XTP + H2O = XMP + diphosphate + H(+). It carries out the reaction N(6)-hydroxy-dATP + H2O = N(6)-hydroxy-dAMP + diphosphate + H(+). Pyrophosphatase that hydrolyzes the non-canonical purine nucleotides inosine triphosphate (ITP), deoxyinosine triphosphate (dITP) as well as 2'-deoxy-N-6-hydroxylaminopurine triphosphate (dHAPTP) and xanthosine 5'-triphosphate (XTP) to their respective monophosphate derivatives. The enzyme does not distinguish between the deoxy- and ribose forms. Probably excludes non-canonical purines from RNA and DNA precursor pools, thus preventing their incorporation into RNA and DNA and avoiding chromosomal lesions. The protein is Inosine triphosphate pyrophosphatase (itpa) of Danio rerio (Zebrafish).